A 172-amino-acid polypeptide reads, in one-letter code: MDLKQYVSEVQDWPKEGVDFKDITTIMDNGEAYGYATDQIVEFAREKEVDIVVGPEARGFIIGCPVAYSMGIGFAPVRKEGKLPREVIRYEYDLEYGTNVLTMHKDAIKPGQRVLITDDLLATGGTIEATIKLVEELGGIVVGIAFIIELKYLHGIDKLDGYDVLSLISYDE.

Belongs to the purine/pyrimidine phosphoribosyltransferase family. As to quaternary structure, homodimer.

Its subcellular location is the cytoplasm. The catalysed reaction is AMP + diphosphate = 5-phospho-alpha-D-ribose 1-diphosphate + adenine. It functions in the pathway purine metabolism; AMP biosynthesis via salvage pathway; AMP from adenine: step 1/1. Its function is as follows. Catalyzes a salvage reaction resulting in the formation of AMP, that is energically less costly than de novo synthesis. In Staphylococcus carnosus (strain TM300), this protein is Adenine phosphoribosyltransferase.